The following is a 218-amino-acid chain: Eukaryotic translation initiation factor 4E-1 (218 aa).

Positions 1–11 are enriched in basic and acidic residues; the sequence is MQTEQPPKESQ. 2 disordered regions span residues 1–20 and 198–218; these read MQTEQPPKESQTENTVSEPQ and FSAHEDSSKSGSTRAKTRMSV. Polar residues predominate over residues 206-218; the sequence is KSGSTRAKTRMSV.

It belongs to the eukaryotic initiation factor 4E family. EIF4F is a multi-subunit complex, the composition of which varies with external and internal environmental conditions. It is composed of at least eIF4A, eIF4E and eIF4G. eIF4E is also known to interact with other partners.

Its function is as follows. Recognizes and binds the 7-methylguanosine-containing mRNA cap during an early step in the initiation of protein synthesis and facilitates ribosome binding by inducing the unwinding of the mRNAs secondary structures. This chain is Eukaryotic translation initiation factor 4E-1 (tif451), found in Schizosaccharomyces pombe (strain 972 / ATCC 24843) (Fission yeast).